We begin with the raw amino-acid sequence, 738 residues long: Sporulation kinase E (738 aa).

PAS domains lie at E29–G99, N150–G220, S271–I342, and S391–M462. Residues G523–Q729 form the Histidine kinase domain. A Phosphohistidine; by autocatalysis modification is found at H526.

It catalyses the reaction ATP + protein L-histidine = ADP + protein N-phospho-L-histidine.. Its function is as follows. Phosphorylates the sporulation-regulatory protein spo0A under biofilm growth conditions. Also able to weakly phosphorylate spo0F. This is Sporulation kinase E (kinE) from Bacillus subtilis (strain 168).